Consider the following 225-residue polypeptide: Octanoyltransferase (225 aa).

In terms of domain architecture, BPL/LPL catalytic spans 29–210 (PDTDDEIWVV…RLIAHLDGAT (182 aa)). Residues 69–76 (RGGQITYH), 141–143 (ALG), and 154–156 (GLS) contribute to the substrate site. Cysteine 172 acts as the Acyl-thioester intermediate in catalysis.

This sequence belongs to the LipB family.

Its subcellular location is the cytoplasm. It carries out the reaction octanoyl-[ACP] + L-lysyl-[protein] = N(6)-octanoyl-L-lysyl-[protein] + holo-[ACP] + H(+). Its pathway is protein modification; protein lipoylation via endogenous pathway; protein N(6)-(lipoyl)lysine from octanoyl-[acyl-carrier-protein]: step 1/2. Catalyzes the transfer of endogenously produced octanoic acid from octanoyl-acyl-carrier-protein onto the lipoyl domains of lipoate-dependent enzymes. Lipoyl-ACP can also act as a substrate although octanoyl-ACP is likely to be the physiological substrate. In Burkholderia pseudomallei (strain K96243), this protein is Octanoyltransferase.